The following is a 158-amino-acid chain: NKG2-F type II integral membrane protein (158 aa).

A compositionally biased stretch (polar residues) spans 1–12 (MNKQRGTYSEVS). A disordered region spans residues 1 to 25 (MNKQRGTYSEVSLAQDPKRQQRKLK). The Cytoplasmic segment spans residues 1–74 (MNKQRGTYSE…LPPPEKLTAE (74 aa)). Residues 75–95 (VLGIICIVLMATVLKTIVLIP) form a helical; Signal-anchor for type II membrane protein membrane-spanning segment. Residues 96-158 (CIGVLEQNNF…VLRRTLICFL (63 aa)) lie on the Extracellular side of the membrane.

In terms of assembly, can form disulfide-bonded heterodimer with CD94. In terms of tissue distribution, natural killer cells.

The protein localises to the membrane. In terms of biological role, may play a role as a receptor for the recognition of MHC class I HLA-E molecules by NK cells. The chain is NKG2-F type II integral membrane protein (KLRC4) from Homo sapiens (Human).